The following is a 273-amino-acid chain: Large ribosomal subunit protein uL2 (273 aa).

Residues 221–273 (RGTAMNPVDHPHGGGEGRNFGKHPVSPWGVQTKGKKTRHNKRTDKYIVRRRGK) form a disordered region. The segment covering 253–273 (KGKKTRHNKRTDKYIVRRRGK) has biased composition (basic residues).

Belongs to the universal ribosomal protein uL2 family. As to quaternary structure, part of the 50S ribosomal subunit. Forms a bridge to the 30S subunit in the 70S ribosome.

One of the primary rRNA binding proteins. Required for association of the 30S and 50S subunits to form the 70S ribosome, for tRNA binding and peptide bond formation. It has been suggested to have peptidyltransferase activity; this is somewhat controversial. Makes several contacts with the 16S rRNA in the 70S ribosome. In Mannheimia succiniciproducens (strain KCTC 0769BP / MBEL55E), this protein is Large ribosomal subunit protein uL2.